The following is a 646-amino-acid chain: Anoctamin-10 (646 aa).

Transmembrane regions (helical) follow at residues 210–230 (LYFG…LIGI), 241–261 (DKYV…LEVW), 314–334 (IYLV…YVMM), 357–377 (VLLF…NLLY), 404–424 (VLVF…FVMQ), 502–522 (FLLF…AVLV), 557–577 (LAFE…IALS), and 592–612 (ILTV…LAFV).

Belongs to the anoctamin family.

The protein localises to the membrane. Functionally, does not exhibit calcium-activated chloride channel (CaCC) activity. Can inhibit the activity of ANO1. This Danio rerio (Zebrafish) protein is Anoctamin-10 (ano10).